The primary structure comprises 440 residues: Elongation factor 1-alpha (440 aa).

The 224-residue stretch at 5 to 228 (KPHINLVVIG…ALDTYIQPPK (224 aa)) folds into the tr-type G domain. Residues 14-21 (GHVDHGKS) form a G1 region. 14 to 21 (GHVDHGKS) serves as a coordination point for GTP. Ser-21 lines the Mg(2+) pocket. The interval 70–74 (GVTID) is G2. Residues 91–94 (DAPG) form a G3 region. Residues 91 to 95 (DAPGH) and 153 to 156 (NKMD) each bind GTP. The interval 153–156 (NKMD) is G4. The segment at 194–196 (SAW) is G5.

Belongs to the TRAFAC class translation factor GTPase superfamily. Classic translation factor GTPase family. EF-Tu/EF-1A subfamily.

The protein localises to the cytoplasm. The enzyme catalyses GTP + H2O = GDP + phosphate + H(+). In terms of biological role, GTP hydrolase that promotes the GTP-dependent binding of aminoacyl-tRNA to the A-site of ribosomes during protein biosynthesis. This chain is Elongation factor 1-alpha, found in Hyperthermus butylicus (strain DSM 5456 / JCM 9403 / PLM1-5).